The following is a 402-amino-acid chain: 3-dehydroquinate synthase (402 aa).

The protein belongs to the archaeal-type DHQ synthase family.

It carries out the reaction 2-amino-2,3,7-trideoxy-D-lyxo-hept-6-ulosonate + NAD(+) + H2O = 3-dehydroquinate + NH4(+) + NADH + H(+). Catalyzes the oxidative deamination and cyclization of 2-amino-3,7-dideoxy-D-threo-hept-6-ulosonic acid (ADH) to yield 3-dehydroquinate (DHQ), which is fed into the canonical shikimic pathway of aromatic amino acid biosynthesis. The protein is 3-dehydroquinate synthase of Methanopyrus kandleri (strain AV19 / DSM 6324 / JCM 9639 / NBRC 100938).